A 454-amino-acid polypeptide reads, in one-letter code: Bifunctional protein GlmU (454 aa).

Residues 1–226 are pyrophosphorylase; it reads MSLNVVILAA…PIETEGANNR (226 aa). UDP-N-acetyl-alpha-D-glucosamine contacts are provided by residues 8 to 11, Lys22, Gln73, 78 to 79, 100 to 102, Gly137, Glu151, Asn166, and Asn224; these read LAAG, GT, and YGD. Residue Asp102 participates in Mg(2+) binding. Asn224 contacts Mg(2+). Positions 227–247 are linker; it reads VQLAALERAYQARRAEELMLA. The N-acetyltransferase stretch occupies residues 248–454; that stretch reads GANLRDPARI…GWQRPVKKPK (207 aa). UDP-N-acetyl-alpha-D-glucosamine is bound by residues Arg330 and Lys348. His360 functions as the Proton acceptor in the catalytic mechanism. Residues Tyr363 and Asn374 each coordinate UDP-N-acetyl-alpha-D-glucosamine. Acetyl-CoA is bound by residues Ala377, 383–384, Ser402, Ala420, and Arg437; that span reads NY.

The protein in the N-terminal section; belongs to the N-acetylglucosamine-1-phosphate uridyltransferase family. It in the C-terminal section; belongs to the transferase hexapeptide repeat family. In terms of assembly, homotrimer. Mg(2+) is required as a cofactor.

Its subcellular location is the cytoplasm. The enzyme catalyses alpha-D-glucosamine 1-phosphate + acetyl-CoA = N-acetyl-alpha-D-glucosamine 1-phosphate + CoA + H(+). The catalysed reaction is N-acetyl-alpha-D-glucosamine 1-phosphate + UTP + H(+) = UDP-N-acetyl-alpha-D-glucosamine + diphosphate. It functions in the pathway nucleotide-sugar biosynthesis; UDP-N-acetyl-alpha-D-glucosamine biosynthesis; N-acetyl-alpha-D-glucosamine 1-phosphate from alpha-D-glucosamine 6-phosphate (route II): step 2/2. Its pathway is nucleotide-sugar biosynthesis; UDP-N-acetyl-alpha-D-glucosamine biosynthesis; UDP-N-acetyl-alpha-D-glucosamine from N-acetyl-alpha-D-glucosamine 1-phosphate: step 1/1. The protein operates within bacterial outer membrane biogenesis; LPS lipid A biosynthesis. In terms of biological role, catalyzes the last two sequential reactions in the de novo biosynthetic pathway for UDP-N-acetylglucosamine (UDP-GlcNAc). The C-terminal domain catalyzes the transfer of acetyl group from acetyl coenzyme A to glucosamine-1-phosphate (GlcN-1-P) to produce N-acetylglucosamine-1-phosphate (GlcNAc-1-P), which is converted into UDP-GlcNAc by the transfer of uridine 5-monophosphate (from uridine 5-triphosphate), a reaction catalyzed by the N-terminal domain. This is Bifunctional protein GlmU from Shewanella amazonensis (strain ATCC BAA-1098 / SB2B).